A 331-amino-acid chain; its full sequence is Hydroxysteroid dehydrogenase-like protein 1 (331 aa).

The segment at 2–82 is required for mitochondria translocation; it reads AAVDRFNLLY…TGSTDGIGKA (81 aa). Residues 74-80 and aspartate 125 each bind NADP(+); that span reads GSTDGIG. Serine 205 lines the substrate pocket. Catalysis depends on tyrosine 218, which acts as the Proton acceptor. Lysine 222 contacts NADP(+).

It belongs to the short-chain dehydrogenases/reductases (SDR) family. 17-beta-HSD 3 subfamily.

The protein localises to the mitochondrion. Its function is as follows. May catalyze the metabolism of steroid hormones and thus play an important role in sex differentiation, the emergence and maintenance of the secondary sexual characters, and the regulation of endocrine. This is Hydroxysteroid dehydrogenase-like protein 1 (HSDL1) from Gallus gallus (Chicken).